Here is a 98-residue protein sequence, read N- to C-terminus: Envelope glycoprotein N (98 aa).

An N-terminal signal peptide occupies residues 1-24 (MVSSAGLSLTLVAALCALVAPALS). At 25-60 (SIVSTEGPLPLLREESRINFWNAACAARGVPVDQPT) the chain is on the virion surface side. Residues 61–81 (AAAVTFYICLLAVLVVALGYA) traverse the membrane as a helical segment. Residues 82 to 98 (TRTCTRMLHASPAGRRV) lie on the Intravirion side of the membrane.

The protein belongs to the herpesviridae glycoprotein N family. Interacts (via N-terminus) with gM (via N-terminus). The gM-gN heterodimer forms the gCII complex. O-glycosylated.

Its subcellular location is the virion membrane. The protein localises to the host membrane. The protein resides in the host Golgi apparatus. It is found in the host trans-Golgi network. In terms of biological role, envelope glycoprotein necessary for proper maturation of gM and modulation of its membrane fusion activity. Also plays a critical role in virion morphogenesis. This Suid herpesvirus 1 (SuHV-1) protein is Envelope glycoprotein N.